A 270-amino-acid chain; its full sequence is ATP synthase subunit a (270 aa).

Transmembrane regions (helical) follow at residues 38-58 (VHIDSLFFSWFTGLIFLGIFY), 98-118 (IAPLALTIFCWVFLMNVMDLV), 143-163 (DVNITMAMALGVFALMIYYSI), 208-228 (LFGNMFAGEVVFILCAAMLPW), and 239-259 (AIFHILVITIQAFVFMMLTIV).

It belongs to the ATPase A chain family. F-type ATPases have 2 components, CF(1) - the catalytic core - and CF(0) - the membrane proton channel. CF(1) has five subunits: alpha(3), beta(3), gamma(1), delta(1), epsilon(1). CF(0) has three main subunits: a(1), b(2) and c(9-12). The alpha and beta chains form an alternating ring which encloses part of the gamma chain. CF(1) is attached to CF(0) by a central stalk formed by the gamma and epsilon chains, while a peripheral stalk is formed by the delta and b chains.

The protein localises to the cell inner membrane. Functionally, key component of the proton channel; it plays a direct role in the translocation of protons across the membrane. The sequence is that of ATP synthase subunit a from Vibrio alginolyticus.